The sequence spans 268 residues: Phosphatidylglycerol--prolipoprotein diacylglyceryl transferase (268 aa).

7 helical membrane-spanning segments follow: residues 27–47, 66–86, 104–124, 130–150, 181–201, 208–228, and 242–262; these read PALR…MWLL, LLFY…VLFY, GGMS…YIAW, FFAV…AGRI, PSQL…LYWF, VGAV…IVET, and FMTM…YLIL. Arg149 is an a 1,2-diacyl-sn-glycero-3-phospho-(1'-sn-glycerol) binding site.

Belongs to the Lgt family.

It is found in the cell inner membrane. The enzyme catalyses L-cysteinyl-[prolipoprotein] + a 1,2-diacyl-sn-glycero-3-phospho-(1'-sn-glycerol) = an S-1,2-diacyl-sn-glyceryl-L-cysteinyl-[prolipoprotein] + sn-glycerol 1-phosphate + H(+). Its pathway is protein modification; lipoprotein biosynthesis (diacylglyceryl transfer). In terms of biological role, catalyzes the transfer of the diacylglyceryl group from phosphatidylglycerol to the sulfhydryl group of the N-terminal cysteine of a prolipoprotein, the first step in the formation of mature lipoproteins. This Shewanella sp. (strain MR-4) protein is Phosphatidylglycerol--prolipoprotein diacylglyceryl transferase.